A 390-amino-acid polypeptide reads, in one-letter code: MGCASSKNRNRCRNCKGGLSPVIVPRSYSMHVHHPAQHTGDSYHTVALTSSTIGSLSLCDSSLRHFHKHLEDSFYKQRVSDQMGEETLISGNGFLHGDEEKMNLDLQAKVIEAKVWSSTINEKIPKIVAKTPIVTPPGEPETINTWELMEGLEDVSPLRSPNHLRSFSFDFVRIQPSHDHDHDVAVSFDLPKSRFHENVKSSCRVDDLDPPDIVSRFKRKTLGKERVVLYFTSLRGIRKTYEDCCNIRIILKSLGIRIDERDVSMHSGFKDELKKLLEGKFNNGVGITLPRVFLGNKYLGGVEEIKKLNENGELEKLIKDCEMVEDGSPGFGNECEACGDVRFVPCETCSGSCKLYHEGEEEDEGVTEYGFQRCPYCNENGLIRCHVCCE.

The Glutaredoxin domain occupies 215–325 (SRFKRKTLGK…KLIKDCEMVE (111 aa)).

This is an uncharacterized protein from Arabidopsis thaliana (Mouse-ear cress).